The following is a 235-amino-acid chain: Large ribosomal subunit protein uL3 (235 aa).

Residues 138–157 (SVSHRSHGSTGGRQDPGKTF) form a disordered region. Q151 is subject to N5-methylglutamine.

It belongs to the universal ribosomal protein uL3 family. As to quaternary structure, part of the 50S ribosomal subunit. Forms a cluster with proteins L14 and L19. In terms of processing, methylated by PrmB.

Its function is as follows. One of the primary rRNA binding proteins, it binds directly near the 3'-end of the 23S rRNA, where it nucleates assembly of the 50S subunit. This chain is Large ribosomal subunit protein uL3, found in Rhodospirillum centenum (strain ATCC 51521 / SW).